The chain runs to 273 residues: 2,3,4,5-tetrahydropyridine-2,6-dicarboxylate N-succinyltransferase (273 aa).

Positions 104 and 141 each coordinate substrate.

The protein belongs to the transferase hexapeptide repeat family. In terms of assembly, homotrimer.

It localises to the cytoplasm. The catalysed reaction is (S)-2,3,4,5-tetrahydrodipicolinate + succinyl-CoA + H2O = (S)-2-succinylamino-6-oxoheptanedioate + CoA. Its pathway is amino-acid biosynthesis; L-lysine biosynthesis via DAP pathway; LL-2,6-diaminopimelate from (S)-tetrahydrodipicolinate (succinylase route): step 1/3. The chain is 2,3,4,5-tetrahydropyridine-2,6-dicarboxylate N-succinyltransferase from Aromatoleum aromaticum (strain DSM 19018 / LMG 30748 / EbN1) (Azoarcus sp. (strain EbN1)).